We begin with the raw amino-acid sequence, 364 residues long: GDP-fucose transporter 1 (364 aa).

8 helical membrane-spanning segments follow: residues 34-56, 76-98, 111-130, 140-162, 167-185, 195-214, 227-249, and 264-286; these read FVLR…ISMV, VTFY…ATCC, LKVA…MITF, VAFY…YLLL, SFYA…WLGV, SWTG…LNAI, IWRL…LLAL, and AHFW…VTGL. Positions 345–364 are disordered; it reads MKKTQEEPHPRENEKSNMEV.

The protein belongs to the TPT transporter family. SLC35C subfamily.

Its subcellular location is the golgi apparatus membrane. It catalyses the reaction GMP(out) + GDP-beta-L-fucose(in) = GMP(in) + GDP-beta-L-fucose(out). Its function is as follows. Antiporter specific for GDP-l-fucose and depending on the concomitant reverse transport of GMP. Involved in GDP-fucose import from the cytoplasm into the Golgi lumen. This chain is GDP-fucose transporter 1 (SLC35C1), found in Bos taurus (Bovine).